The primary structure comprises 189 residues: Xanthine phosphoribosyltransferase (189 aa).

Xanthine contacts are provided by leucine 20 and asparagine 27. Residue 128–132 (ANGEA) coordinates 5-phospho-alpha-D-ribose 1-diphosphate. Lysine 156 is a binding site for xanthine.

This sequence belongs to the purine/pyrimidine phosphoribosyltransferase family. Xpt subfamily. In terms of assembly, homodimer.

The protein localises to the cytoplasm. It carries out the reaction XMP + diphosphate = xanthine + 5-phospho-alpha-D-ribose 1-diphosphate. The protein operates within purine metabolism; XMP biosynthesis via salvage pathway; XMP from xanthine: step 1/1. Its function is as follows. Converts the preformed base xanthine, a product of nucleic acid breakdown, to xanthosine 5'-monophosphate (XMP), so it can be reused for RNA or DNA synthesis. The chain is Xanthine phosphoribosyltransferase from Clostridium acetobutylicum (strain ATCC 824 / DSM 792 / JCM 1419 / IAM 19013 / LMG 5710 / NBRC 13948 / NRRL B-527 / VKM B-1787 / 2291 / W).